Reading from the N-terminus, the 262-residue chain is 2-oxo-tetronate isomerase (262 aa).

Catalysis depends on E143, which acts as the Proton donor/acceptor. Mg(2+)-binding residues include E143, D178, Q204, and E240. Residue E240 is the Proton donor/acceptor of the active site.

Belongs to the hyi family. OtnI subfamily.

It carries out the reaction 2-dehydro-L-erythronate = 3-dehydro-L-erythronate. The catalysed reaction is 2-dehydro-D-erythronate = 3-dehydro-D-erythronate. In terms of biological role, catalyzes the isomerization of 2-oxo-tetronate to 3-oxo-tetronate. The polypeptide is 2-oxo-tetronate isomerase (Pectobacterium atrosepticum (strain SCRI 1043 / ATCC BAA-672) (Erwinia carotovora subsp. atroseptica)).